Reading from the N-terminus, the 439-residue chain is Protein translocase subunit SecY (439 aa).

Transmembrane regions (helical) follow at residues 19 to 39 (ILFT…TAPG), 68 to 88 (YSLF…VQLL), 116 to 136 (YITL…FQAM), 151 to 171 (LMIG…GEQI), 176 to 196 (FGSG…PSAI), 216 to 236 (WIFV…TTFV), 269 to 289 (VIPV…LQFL), 312 to 332 (WTGM…YSFV), 373 to 393 (VGSL…NVWG), and 396 to 416 (KIVA…IQAV).

This sequence belongs to the SecY/SEC61-alpha family. Component of the Sec protein translocase complex. Heterotrimer consisting of SecY, SecE and SecG subunits. The heterotrimers can form oligomers, although 1 heterotrimer is thought to be able to translocate proteins. Interacts with the ribosome. Interacts with SecDF, and other proteins may be involved. Interacts with SecA.

The protein resides in the cell membrane. The central subunit of the protein translocation channel SecYEG. Consists of two halves formed by TMs 1-5 and 6-10. These two domains form a lateral gate at the front which open onto the bilayer between TMs 2 and 7, and are clamped together by SecE at the back. The channel is closed by both a pore ring composed of hydrophobic SecY resides and a short helix (helix 2A) on the extracellular side of the membrane which forms a plug. The plug probably moves laterally to allow the channel to open. The ring and the pore may move independently. The chain is Protein translocase subunit SecY from Lactococcus lactis subsp. cremoris (Streptococcus cremoris).